The following is an 839-amino-acid chain: Glycerol-3-phosphate acyltransferase (839 aa).

The HXXXXD motif motif lies at 309 to 314 (CHRSHI).

Belongs to the GPAT/DAPAT family.

The protein localises to the cell inner membrane. It catalyses the reaction sn-glycerol 3-phosphate + an acyl-CoA = a 1-acyl-sn-glycero-3-phosphate + CoA. The protein operates within phospholipid metabolism; CDP-diacylglycerol biosynthesis; CDP-diacylglycerol from sn-glycerol 3-phosphate: step 1/3. The polypeptide is Glycerol-3-phosphate acyltransferase (Pseudomonas fluorescens (strain SBW25)).